A 422-amino-acid polypeptide reads, in one-letter code: Glucose-1-phosphate adenylyltransferase 2 (422 aa).

Alpha-D-glucose 1-phosphate is bound by residues Tyr-110, Gly-175, 190 to 191, and Ser-208; that span reads EK.

Belongs to the bacterial/plant glucose-1-phosphate adenylyltransferase family. As to quaternary structure, homotetramer.

It catalyses the reaction alpha-D-glucose 1-phosphate + ATP + H(+) = ADP-alpha-D-glucose + diphosphate. It participates in glycan biosynthesis; glycogen biosynthesis. Involved in the biosynthesis of ADP-glucose, a building block required for the elongation reactions to produce glycogen. Catalyzes the reaction between ATP and alpha-D-glucose 1-phosphate (G1P) to produce pyrophosphate and ADP-Glc. This is Glucose-1-phosphate adenylyltransferase 2 from Alkalilimnicola ehrlichii (strain ATCC BAA-1101 / DSM 17681 / MLHE-1).